Consider the following 340-residue polypeptide: L-threonine 3-dehydrogenase (340 aa).

C38 contacts Zn(2+). Residues T40 and H43 each act as charge relay system in the active site. Positions 63, 64, 93, 96, 99, and 107 each coordinate Zn(2+). Residues I175, D195, R200, 262–264, and 286–287 contribute to the NAD(+) site; these read LGI and IY.

The protein belongs to the zinc-containing alcohol dehydrogenase family. In terms of assembly, homotetramer. Zn(2+) serves as cofactor.

It localises to the cytoplasm. The enzyme catalyses L-threonine + NAD(+) = (2S)-2-amino-3-oxobutanoate + NADH + H(+). It participates in amino-acid degradation; L-threonine degradation via oxydo-reductase pathway; glycine from L-threonine: step 1/2. Its function is as follows. Catalyzes the NAD(+)-dependent oxidation of L-threonine to 2-amino-3-ketobutyrate. This chain is L-threonine 3-dehydrogenase, found in Legionella pneumophila subsp. pneumophila (strain Philadelphia 1 / ATCC 33152 / DSM 7513).